A 130-amino-acid polypeptide reads, in one-letter code: MPKQAIIPAGTTTPIAPFVPGTMADGIVYVSGTLPFDKDNNVVHVGDASAQTRHVLETIQNVIATAGGTMDDVTFNMIMIKDWADYAKVNAVYAEFFPGTKPARYCIQCGLVKPDALVEIASIAHVGNKA.

The protein belongs to the RutC family.

It catalyses the reaction (Z)-3-aminoacrylate + H2O + H(+) = 3-oxopropanoate + NH4(+). In terms of biological role, involved in pyrimidine catabolism. Catalyzes the deamination of 3-aminoacrylate to malonic semialdehyde, a reaction that can also occur spontaneously. RutC may facilitate the reaction and modulate the metabolic fitness, rather than catalyzing essential functions. This Variovorax paradoxus (strain S110) protein is 3-aminoacrylate deaminase RutC.